The primary structure comprises 383 residues: MGEEDIGEAVPKEQRQGWGQFLKQIATFSGDLSSLTAPSFILSPVSLVEFPAYWGEHPDEFAKISTGKDEIERMNLVLKWFIGTLKGQFTARNTSMGSEKKPLNPILGELFLGKWPDKNDRGETTLTAEQVSHHPPVTAYHIENRKAGVTLEGHCAQKTSFSGRTIQVKQVGHAILRVKLAGSDKEELYLITLPNLLIEGLWYGAPYVELTGNSYIQSTTCLLTTLSYTGKGYFSGKAHSFKATIGAGGNALYTVEGEWAGVSKYKGKSVSGGSNELFWDASTQREEVSVEAVEQQGEMESRKVWKTVAHGIRSGDFETASKDKARIENAQRQKRKDEAAAGTPHQLERFVHLDNDQEYSQLAAMFKGQPATEDGYRSKPRVH.

A compositionally biased stretch (basic and acidic residues) spans 317-339 (FETASKDKARIENAQRQKRKDEA). A disordered region spans residues 317 to 346 (FETASKDKARIENAQRQKRKDEAAAGTPHQ).

The protein belongs to the OSBP family.

In terms of biological role, lipid transporter involved in lipid countertransport between the Golgi complex and membranes of the endoplasmic reticulum: specifically exchanges sterol with phosphatidylinositol 4-phosphate (PI4P), delivering sterol to the Golgi in exchange for PI4P, which is degraded by the SAC1 phosphatase in the endoplasmic reticulum. The chain is Protein KES1 (KES1) from Mycosarcoma maydis (Corn smut fungus).